Reading from the N-terminus, the 126-residue chain is Glycine--tRNA ligase beta subunit (126 aa).

The protein belongs to the class-II aminoacyl-tRNA synthetase family. Tetramer of two alpha and two beta subunits.

It localises to the cytoplasm. It catalyses the reaction tRNA(Gly) + glycine + ATP = glycyl-tRNA(Gly) + AMP + diphosphate. The chain is Glycine--tRNA ligase beta subunit (glyS) from Neisseria gonorrhoeae.